The sequence spans 66 residues: Large ribosomal subunit protein uL29 (66 aa).

The protein belongs to the universal ribosomal protein uL29 family.

The protein is Large ribosomal subunit protein uL29 of Helicobacter pylori (strain P12).